We begin with the raw amino-acid sequence, 354 residues long: MPLVAHTDLPTFQRLREEGEEILDPDRASNQDIREMHIGLLNMMPDAALEATERQFFRLVGACNQIVQFHVHPFTIEGLKRSPEAQAHIAKYYESFEQIKRDGLDALIISGANVSHPRLPEEDFWQPLSEVFFWAKENVTSILCSCLATHALIQYCYGIERTRLPAKRWGVFSHKLTDRTHPLVAEINTRFDVPHSRFNEIFQSDMERHGLKVLAVSKEAGVHLAVSPDGFRIVFFQGHPEYDDISLLKEYKREILRFYRAERDDYPPFPENYFNDVVQQILVDYEQRVRSAKQSGQRLEEFPESLILEHIDNTWSDTAKAVFNNWLGKIYQLTHQERGLPFMDGVDPNNPLGL.

Cys-146 acts as the Acyl-thioester intermediate in catalysis. Residues Lys-167 and Ser-196 each coordinate substrate. His-239 acts as the Proton acceptor in catalysis. Residue Glu-241 is part of the active site. Substrate is bound at residue Arg-253.

It belongs to the MetA family.

The protein resides in the cytoplasm. It carries out the reaction L-homoserine + succinyl-CoA = O-succinyl-L-homoserine + CoA. The protein operates within amino-acid biosynthesis; L-methionine biosynthesis via de novo pathway; O-succinyl-L-homoserine from L-homoserine: step 1/1. In terms of biological role, transfers a succinyl group from succinyl-CoA to L-homoserine, forming succinyl-L-homoserine. In Methylobacter tundripaludum (strain ATCC BAA-1195 / DSM 17260 / SV96), this protein is Homoserine O-succinyltransferase.